Reading from the N-terminus, the 106-residue chain is Protein S40-3 (106 aa).

Residues 1–65 are disordered; sequence MSEEFQESEV…TEEEGEMTPP (65 aa). The segment covering 16–41 has biased composition (basic and acidic residues); it reads SFTRKDNKISHNNENYERKSTEKDKI.

Belongs to the senescence regulator S40 family.

Its subcellular location is the nucleus. Functionally, regulates senescence either by modulating WRKY53 or by activating SAG12. Affects the natural variation of cyst nematodes sex ratio and susceptibility to parasitic nematodes, depending on single nucleotide polymorphism (SNPs) between cultivars. This Arabidopsis thaliana (Mouse-ear cress) protein is Protein S40-3.